A 106-amino-acid chain; its full sequence is Large ribosomal subunit protein uL24 (106 aa).

This sequence belongs to the universal ribosomal protein uL24 family. Part of the 50S ribosomal subunit.

One of two assembly initiator proteins, it binds directly to the 5'-end of the 23S rRNA, where it nucleates assembly of the 50S subunit. In terms of biological role, one of the proteins that surrounds the polypeptide exit tunnel on the outside of the subunit. This is Large ribosomal subunit protein uL24 from Clostridium tetani (strain Massachusetts / E88).